The chain runs to 590 residues: Aspartate--tRNA ligase (590 aa).

Residue E174 coordinates L-aspartate. The segment at 198–201 is aspartate; the sequence is QLMK. Position 220 (R220) interacts with L-aspartate. ATP-binding positions include 220–222 and Q229; that span reads RDE. Residue H443 participates in L-aspartate binding. Residue E484 coordinates ATP. Residue R491 coordinates L-aspartate. 536-539 lines the ATP pocket; it reads GLDR.

It belongs to the class-II aminoacyl-tRNA synthetase family. Type 1 subfamily. In terms of assembly, homodimer.

The protein localises to the cytoplasm. It carries out the reaction tRNA(Asp) + L-aspartate + ATP = L-aspartyl-tRNA(Asp) + AMP + diphosphate. Functionally, catalyzes the attachment of L-aspartate to tRNA(Asp) in a two-step reaction: L-aspartate is first activated by ATP to form Asp-AMP and then transferred to the acceptor end of tRNA(Asp). This Lactococcus lactis subsp. cremoris (strain MG1363) protein is Aspartate--tRNA ligase.